Here is a 153-residue protein sequence, read N- to C-terminus: uncharacterized protein (153 aa).

This is an uncharacterized protein from Alkalihalophilus pseudofirmus (strain ATCC BAA-2126 / JCM 17055 / OF4) (Bacillus pseudofirmus).